We begin with the raw amino-acid sequence, 150 residues long: Ribosome-binding factor A (150 aa).

Positions 119–150 are disordered; that stretch reads VAERAKSAQPAGEPDPYRFDGAAAADDDEPAT.

This sequence belongs to the RbfA family. Monomer. Binds 30S ribosomal subunits, but not 50S ribosomal subunits or 70S ribosomes.

The protein localises to the cytoplasm. Functionally, one of several proteins that assist in the late maturation steps of the functional core of the 30S ribosomal subunit. Associates with free 30S ribosomal subunits (but not with 30S subunits that are part of 70S ribosomes or polysomes). Required for efficient processing of 16S rRNA. May interact with the 5'-terminal helix region of 16S rRNA. The chain is Ribosome-binding factor A from Acidothermus cellulolyticus (strain ATCC 43068 / DSM 8971 / 11B).